The chain runs to 115 residues: Probable prefoldin subunit 1 (115 aa).

This sequence belongs to the prefoldin subunit beta family. In terms of assembly, heterohexamer of two PFD-alpha type and four PFD-beta type subunits.

Functionally, binds specifically to cytosolic chaperonin (c-CPN) and transfers target proteins to it. Binds to nascent polypeptide chain and promotes folding in an environment in which there are many competing pathways for nonnative proteins. This Dictyostelium discoideum (Social amoeba) protein is Probable prefoldin subunit 1 (pfdn1).